Consider the following 572-residue polypeptide: Proline--tRNA ligase (572 aa).

Belongs to the class-II aminoacyl-tRNA synthetase family. ProS type 1 subfamily. As to quaternary structure, homodimer.

It is found in the cytoplasm. The enzyme catalyses tRNA(Pro) + L-proline + ATP = L-prolyl-tRNA(Pro) + AMP + diphosphate. Catalyzes the attachment of proline to tRNA(Pro) in a two-step reaction: proline is first activated by ATP to form Pro-AMP and then transferred to the acceptor end of tRNA(Pro). As ProRS can inadvertently accommodate and process non-cognate amino acids such as alanine and cysteine, to avoid such errors it has two additional distinct editing activities against alanine. One activity is designated as 'pretransfer' editing and involves the tRNA(Pro)-independent hydrolysis of activated Ala-AMP. The other activity is designated 'posttransfer' editing and involves deacylation of mischarged Ala-tRNA(Pro). The misacylated Cys-tRNA(Pro) is not edited by ProRS. The sequence is that of Proline--tRNA ligase from Pectobacterium carotovorum subsp. carotovorum (strain PC1).